A 368-amino-acid polypeptide reads, in one-letter code: Quinolinate synthase (368 aa).

Residues His-46 and Ser-63 each coordinate iminosuccinate. Cys-110 contributes to the [4Fe-4S] cluster binding site. Iminosuccinate is bound by residues 141–143 (YVN) and Ser-162. Cys-230 lines the [4Fe-4S] cluster pocket. Residues 256–258 (HPE) and Thr-273 contribute to the iminosuccinate site. Cys-320 is a [4Fe-4S] cluster binding site.

Belongs to the quinolinate synthase family. Type 3 subfamily. [4Fe-4S] cluster is required as a cofactor.

The protein resides in the cytoplasm. It catalyses the reaction iminosuccinate + dihydroxyacetone phosphate = quinolinate + phosphate + 2 H2O + H(+). The protein operates within cofactor biosynthesis; NAD(+) biosynthesis; quinolinate from iminoaspartate: step 1/1. In terms of biological role, catalyzes the condensation of iminoaspartate with dihydroxyacetone phosphate to form quinolinate. This Bacillus anthracis (strain A0248) protein is Quinolinate synthase.